Here is a 186-residue protein sequence, read N- to C-terminus: MENNNNNHQQPPKDNEQLKSFWSKGMEGDLNVKNHEFPISRIKRIMKFDPDVSMIAAEAPNLLSKACEMFVMDLTMRSWLHAQESNRLTIRKSDVDAVVSQTVIFDFLRDDVPKDEGEPVVAAADPVDDVADHVAVPDLNNEELPPGTVIGTPVCYGLGIHAPHPQMPGAWTEEDATGANGGNGGN.

The tract at residues 166–186 (QMPGAWTEEDATGANGGNGGN) is disordered.

This sequence belongs to the NFYC/HAP5 subunit family. In terms of assembly, heterotrimeric transcription factor composed of three components, NF-YA, NF-YB and NF-YC. NF-YB and NF-YC must interact and dimerize for NF-YA association and DNA binding. As to expression, expressed in inflorescences and flowers.

The protein resides in the nucleus. Functionally, stimulates the transcription of various genes by recognizing and binding to a CCAAT motif in promoters. This Arabidopsis thaliana (Mouse-ear cress) protein is Nuclear transcription factor Y subunit C-5 (NFYC5).